Consider the following 145-residue polypeptide: Probable 4-amino-4-deoxy-L-arabinose-phosphoundecaprenol flippase subunit ArnF (145 aa).

Topologically, residues 1 to 3 (MAH) are cytoplasmic. The chain crosses the membrane as a helical span at residues 4 to 24 (LTLSIRGLLLALMSVLLISVA). The Periplasmic segment spans residues 25 to 61 (QLSMKWGMGTLNQLWSDLVMLWQGEDYSSLFSQALAP). The helical transmembrane segment at 62 to 82 (VMAVGAGLFCYALSMACWVMA) threads the bilayer. The Cytoplasmic segment spans residues 83 to 89 (LKRLPLS). A helical transmembrane segment spans residues 90–110 (IAYPLLSLSYVLVYLGAVYLP). Residues 111-114 (WLNE) lie on the Periplasmic side of the membrane. The chain crosses the membrane as a helical span at residues 115 to 135 (PLSWVKGTGIFLILLGLIFVL). Topologically, residues 136 to 145 (PKKNQTSDKS) are cytoplasmic.

It belongs to the ArnF family. Heterodimer of ArnE and ArnF.

Its subcellular location is the cell inner membrane. It participates in bacterial outer membrane biogenesis; lipopolysaccharide biosynthesis. Functionally, translocates 4-amino-4-deoxy-L-arabinose-phosphoundecaprenol (alpha-L-Ara4N-phosphoundecaprenol) from the cytoplasmic to the periplasmic side of the inner membrane. The sequence is that of Probable 4-amino-4-deoxy-L-arabinose-phosphoundecaprenol flippase subunit ArnF from Shewanella sediminis (strain HAW-EB3).